Reading from the N-terminus, the 348-residue chain is tRNA pseudouridine synthase B (348 aa).

The active-site Nucleophile is the Asp52.

This sequence belongs to the pseudouridine synthase TruB family. Type 1 subfamily.

The catalysed reaction is uridine(55) in tRNA = pseudouridine(55) in tRNA. Functionally, responsible for synthesis of pseudouridine from uracil-55 in the psi GC loop of transfer RNAs. The protein is tRNA pseudouridine synthase B of Rhodopirellula baltica (strain DSM 10527 / NCIMB 13988 / SH1).